The chain runs to 407 residues: Polygalacturonase (407 aa).

Residues 1-26 (MAPHLNIVPSMFVLLLLFISASKVQS) form the signal peptide. PbH1 repeat units lie at residues 180-206 (CKNITLERLKIEAPDESPNTDGIHMGK) and 207-228 (SEGVNIIASDIKTGDDCISIGD). Asn182 carries N-linked (GlcNAc...) asparagine glycosylation. Asp221 (proton donor) is an active-site residue. The cysteines at positions 223 and 240 are disulfide-linked. Residue His244 is part of the active site. PbH1 repeat units lie at residues 260-281 (VEGIKISNCTITNTSNGARIKT) and 290-311 (VSEIHFEDITMNNVSSPILIDQ). 4 N-linked (GlcNAc...) asparagine glycosylation sites follow: Asn267, Asn272, Asn302, and Asn331. 2 disulfide bridges follow: Cys351-Cys357 and Cys379-Cys395. The stretch at 357 to 384 (CQNVELADIDIKHNGAEPATSQCLNVKP) is one PbH1 5 repeat.

This sequence belongs to the glycosyl hydrolase 28 family. In terms of tissue distribution, pollen.

It localises to the secreted. Its subcellular location is the cell wall. The catalysed reaction is (1,4-alpha-D-galacturonosyl)n+m + H2O = (1,4-alpha-D-galacturonosyl)n + (1,4-alpha-D-galacturonosyl)m.. Its function is as follows. May function in the depolymerization of the pectin in its walls during pollen tube elongation, or in that of the pistil during pollination. In Gossypium hirsutum (Upland cotton), this protein is Polygalacturonase (G9).